The chain runs to 147 residues: D-aminoacyl-tRNA deacylase (147 aa).

Residues 137 to 138 (GP) carry the Gly-cisPro motif, important for rejection of L-amino acids motif.

The protein belongs to the DTD family. In terms of assembly, homodimer.

Its subcellular location is the cytoplasm. The catalysed reaction is glycyl-tRNA(Ala) + H2O = tRNA(Ala) + glycine + H(+). The enzyme catalyses a D-aminoacyl-tRNA + H2O = a tRNA + a D-alpha-amino acid + H(+). An aminoacyl-tRNA editing enzyme that deacylates mischarged D-aminoacyl-tRNAs. Also deacylates mischarged glycyl-tRNA(Ala), protecting cells against glycine mischarging by AlaRS. Acts via tRNA-based rather than protein-based catalysis; rejects L-amino acids rather than detecting D-amino acids in the active site. By recycling D-aminoacyl-tRNA to D-amino acids and free tRNA molecules, this enzyme counteracts the toxicity associated with the formation of D-aminoacyl-tRNA entities in vivo and helps enforce protein L-homochirality. This is D-aminoacyl-tRNA deacylase from Acinetobacter baumannii (strain AYE).